The following is a 433-amino-acid chain: Adenylyltransferase and sulfurtransferase UBA4 (433 aa).

Residues Gly-70, Asp-91, 98-102 (SNLHR), Lys-115, and 159-160 (DT) each bind ATP. Cys-201 and Cys-204 together coordinate Zn(2+). Cys-218 (glycyl thioester intermediate; for adenylyltransferase activity) is an active-site residue. Positions 279 and 282 each coordinate Zn(2+). Residues 332–431 (SGNNKVLLDV…YIDDVDQSIP (100 aa)) enclose the Rhodanese domain. The active-site Cysteine persulfide intermediate; for sulfurtransferase activity is the Cys-390.

In the N-terminal section; belongs to the HesA/MoeB/ThiF family. UBA4 subfamily. Requires Zn(2+) as cofactor.

The protein resides in the cytoplasm. The protein localises to the cytosol. Its pathway is tRNA modification; 5-methoxycarbonylmethyl-2-thiouridine-tRNA biosynthesis. Its function is as follows. Plays a central role in 2-thiolation of mcm(5)S(2)U at tRNA wobble positions of cytosolic tRNA(Lys), tRNA(Glu) and tRNA(Gln). Acts by mediating the C-terminal thiocarboxylation of sulfur carrier URM1. Its N-terminus first activates URM1 as acyl-adenylate (-COAMP), then the persulfide sulfur on the catalytic cysteine is transferred to URM1 to form thiocarboxylation (-COSH) of its C-terminus. The reaction probably involves hydrogen sulfide that is generated from the persulfide intermediate and that acts as a nucleophile towards URM1. Subsequently, a transient disulfide bond is formed. Does not use thiosulfate as sulfur donor; NFS1 probably acting as a sulfur donor for thiocarboxylation reactions. Prior mcm(5) tRNA modification by the elongator complex is required for 2-thiolation. May also be involved in protein urmylation. In Candida glabrata (strain ATCC 2001 / BCRC 20586 / JCM 3761 / NBRC 0622 / NRRL Y-65 / CBS 138) (Yeast), this protein is Adenylyltransferase and sulfurtransferase UBA4.